Consider the following 427-residue polypeptide: Kallistatin (427 aa).

The signal sequence occupies residues 1–20; the sequence is MHLIDYLLLLLVGLLALSHG. N-linked (GlcNAc...) asparagine glycans are attached at residues Asn33, Asn108, and Asn157. Residue Asn238 is glycosylated (N-linked (GlcNAc...) (complex) asparagine).

Belongs to the serpin family. Monomer and some homodimers. Post-translationally, the N-terminus is blocked. As to expression, expressed by the liver and secreted in plasma.

The protein resides in the secreted. Its function is as follows. Inhibits human amidolytic and kininogenase activities of tissue kallikrein. Inhibition is achieved by formation of an equimolar, heat- and SDS-stable complex between the inhibitor and the enzyme, and generation of a small C-terminal fragment of the inhibitor due to cleavage at the reactive site by tissue kallikrein. The chain is Kallistatin (SERPINA4) from Homo sapiens (Human).